An 860-amino-acid chain; its full sequence is Tetratricopeptide repeat protein 13 (860 aa).

TPR repeat units follow at residues 143-176 (TNEE…EPDL), 216-248 (PEVF…LQPS), 249-282 (ARLY…NKNQ), 284-316 (IAML…KVDF), 317-350 (IDAY…NQNH), 352-384 (QTLQ…EPYN), and 386-418 (VCQY…DPLP).

The protein is Tetratricopeptide repeat protein 13 (TTC13) of Homo sapiens (Human).